The sequence spans 668 residues: Biotin biosynthesis bifunctional protein BioWF (668 aa).

Residue Arg293 coordinates substrate. 380-381 (GY) is a binding site for pyridoxal 5'-phosphate. His405 provides a ligand contact to substrate. Residues Ser451, 476-479 (DDAH), and 507-510 (TASK) each bind pyridoxal 5'-phosphate. Lys510 is subject to N6-(pyridoxal phosphate)lysine.

This sequence in the N-terminal section; belongs to the BioW family. The protein in the C-terminal section; belongs to the class-II pyridoxal-phosphate-dependent aminotransferase family. BioF subfamily. Homodimer. Mg(2+) is required as a cofactor. The cofactor is pyridoxal 5'-phosphate.

It catalyses the reaction heptanedioate + ATP + CoA = 6-carboxyhexanoyl-CoA + AMP + diphosphate. The enzyme catalyses 6-carboxyhexanoyl-[ACP] + L-alanine + H(+) = (8S)-8-amino-7-oxononanoate + holo-[ACP] + CO2. It participates in metabolic intermediate metabolism; pimeloyl-CoA biosynthesis; pimeloyl-CoA from pimelate: step 1/1. The protein operates within cofactor biosynthesis; biotin biosynthesis. Functionally, catalyzes both the decarboxylative condensation of pimeloyl-[acyl-carrier protein] and L-alanine to produce 8-amino-7-oxononanoate (AON), [acyl-carrier protein], and carbon dioxide, and the transformation of pimelate into pimeloyl-CoA with concomitant hydrolysis of ATP to AMP. In Cutibacterium acnes (strain SK137) (Propionibacterium acnes), this protein is Biotin biosynthesis bifunctional protein BioWF.